The primary structure comprises 124 residues: Ribonuclease pancreatic (124 aa).

Positions 1–13 (KESAAAKFERQHM) are enriched in basic and acidic residues. The segment at 1-24 (KESAAAKFERQHMDPSTSSASSSN) is disordered. The substrate site is built by K7 and R10. H12 (proton acceptor) is an active-site residue. Intrachain disulfides connect C26/C84, C40/C95, C58/C110, and C65/C72. Substrate contacts are provided by residues 41 to 45 (KPVNT), K66, and R85. H119 (proton donor) is an active-site residue.

The protein belongs to the pancreatic ribonuclease family. As to quaternary structure, monomer. Interacts with and forms tight 1:1 complexes with RNH1. Dimerization of two such complexes may occur. Interaction with RNH1 inhibits this protein. Pancreas.

The protein resides in the secreted. It catalyses the reaction an [RNA] containing cytidine + H2O = an [RNA]-3'-cytidine-3'-phosphate + a 5'-hydroxy-ribonucleotide-3'-[RNA].. The catalysed reaction is an [RNA] containing uridine + H2O = an [RNA]-3'-uridine-3'-phosphate + a 5'-hydroxy-ribonucleotide-3'-[RNA].. Functionally, endonuclease that catalyzes the cleavage of RNA on the 3' side of pyrimidine nucleotides. Acts on single-stranded and double-stranded RNA. This chain is Ribonuclease pancreatic (RNASE1), found in Cervus elaphus (Red deer).